The following is a 451-amino-acid chain: ATP synthase subunit beta (451 aa).

Residue 143–150 participates in ATP binding; it reads GGAGVGKT.

The protein belongs to the ATPase alpha/beta chains family. F-type ATPases have 2 components, CF(1) - the catalytic core - and CF(0) - the membrane proton channel. CF(1) has five subunits: alpha(3), beta(3), gamma(1), delta(1), epsilon(1). CF(0) has three main subunits: a(1), b(2) and c(9-12). The alpha and beta chains form an alternating ring which encloses part of the gamma chain. CF(1) is attached to CF(0) by a central stalk formed by the gamma and epsilon chains, while a peripheral stalk is formed by the delta and b chains.

The protein localises to the cell membrane. The enzyme catalyses ATP + H2O + 4 H(+)(in) = ADP + phosphate + 5 H(+)(out). Produces ATP from ADP in the presence of a proton gradient across the membrane. The catalytic sites are hosted primarily by the beta subunits. The sequence is that of ATP synthase subunit beta from Coprothermobacter proteolyticus (strain ATCC 35245 / DSM 5265 / OCM 4 / BT).